We begin with the raw amino-acid sequence, 77 residues long: RNA-binding protein Hfq (77 aa).

In terms of domain architecture, Sm spans Asp10 to Ile70.

Belongs to the Hfq family. Homohexamer.

Functionally, RNA chaperone that binds small regulatory RNA (sRNAs) and mRNAs to facilitate mRNA translational regulation in response to envelope stress, environmental stress and changes in metabolite concentrations. Also binds with high specificity to tRNAs. In Clostridium botulinum (strain Eklund 17B / Type B), this protein is RNA-binding protein Hfq.